We begin with the raw amino-acid sequence, 158 residues long: Snaclec mucrocetin subunit alpha (158 aa).

A signal peptide spans 1–23 (MGRFIFVSFGLLVVFLSLSGTGA). Cystine bridges form between cysteine 27-cysteine 38, cysteine 55-cysteine 152, and cysteine 127-cysteine 144. The C-type lectin domain maps to 34-153 (YDRYCYQAFS…CGRENPFVCK (120 aa)).

Belongs to the snaclec family. As to quaternary structure, tetramer of heterodimers of alpha and beta subunits (alphabeta)(4); disulfide-linked. In terms of tissue distribution, expressed by the venom gland.

The protein resides in the secreted. In terms of biological role, platelet-agglutinating factor that acts in a vWF-independent manner. Binds specifically to platelet GPIbalpha (GP1BA) to a distinct binding site from that of flavocetin-A. This chain is Snaclec mucrocetin subunit alpha, found in Protobothrops mucrosquamatus (Taiwan habu).